The sequence spans 104 residues: MAIQGIEGVISQLQATAMTARNTSVADTQPEISFAGQLHAALDRISDTQNAARTQAEKFTLGEPGVALNDVMTDLQKSSVSLQMGIQVRNKLVTAYQEMMSMQV.

The protein belongs to the FliE family.

The protein resides in the bacterial flagellum basal body. This chain is Flagellar hook-basal body complex protein FliE, found in Enterobacter sp. (strain 638).